The chain runs to 189 residues: UPF0301 protein CTA_0231 (189 aa).

The protein belongs to the UPF0301 (AlgH) family.

The sequence is that of UPF0301 protein CTA_0231 from Chlamydia trachomatis serovar A (strain ATCC VR-571B / DSM 19440 / HAR-13).